A 158-amino-acid chain; its full sequence is NAD(P)H-quinone oxidoreductase subunit J, chloroplastic (158 aa).

The protein belongs to the complex I 30 kDa subunit family. As to quaternary structure, NDH is composed of at least 16 different subunits, 5 of which are encoded in the nucleus.

It localises to the plastid. Its subcellular location is the chloroplast thylakoid membrane. It catalyses the reaction a plastoquinone + NADH + (n+1) H(+)(in) = a plastoquinol + NAD(+) + n H(+)(out). It carries out the reaction a plastoquinone + NADPH + (n+1) H(+)(in) = a plastoquinol + NADP(+) + n H(+)(out). In terms of biological role, NDH shuttles electrons from NAD(P)H:plastoquinone, via FMN and iron-sulfur (Fe-S) centers, to quinones in the photosynthetic chain and possibly in a chloroplast respiratory chain. The immediate electron acceptor for the enzyme in this species is believed to be plastoquinone. Couples the redox reaction to proton translocation, and thus conserves the redox energy in a proton gradient. This Nymphaea alba (White water-lily) protein is NAD(P)H-quinone oxidoreductase subunit J, chloroplastic.